A 316-amino-acid polypeptide reads, in one-letter code: Pantothenate kinase (316 aa).

95-102 is a binding site for ATP; it reads GSVAVGKS.

The protein belongs to the prokaryotic pantothenate kinase family.

It is found in the cytoplasm. The catalysed reaction is (R)-pantothenate + ATP = (R)-4'-phosphopantothenate + ADP + H(+). It functions in the pathway cofactor biosynthesis; coenzyme A biosynthesis; CoA from (R)-pantothenate: step 1/5. The sequence is that of Pantothenate kinase from Shewanella woodyi (strain ATCC 51908 / MS32).